The primary structure comprises 87 residues: Putative regulatory protein GWCH70_1057 (87 aa).

The protein belongs to the RemA family.

The protein is Putative regulatory protein GWCH70_1057 of Geobacillus sp. (strain WCH70).